The primary structure comprises 200 residues: Crossover junction endodeoxyribonuclease RuvC (200 aa).

Active-site residues include Asp18, Glu78, and Asp151. Positions 18, 78, and 151 each coordinate Mg(2+).

The protein belongs to the RuvC family. As to quaternary structure, homodimer which binds Holliday junction (HJ) DNA. The HJ becomes 2-fold symmetrical on binding to RuvC with unstacked arms; it has a different conformation from HJ DNA in complex with RuvA. In the full resolvosome a probable DNA-RuvA(4)-RuvB(12)-RuvC(2) complex forms which resolves the HJ. Mg(2+) is required as a cofactor.

Its subcellular location is the cytoplasm. It catalyses the reaction Endonucleolytic cleavage at a junction such as a reciprocal single-stranded crossover between two homologous DNA duplexes (Holliday junction).. The RuvA-RuvB-RuvC complex processes Holliday junction (HJ) DNA during genetic recombination and DNA repair. Endonuclease that resolves HJ intermediates. Cleaves cruciform DNA by making single-stranded nicks across the HJ at symmetrical positions within the homologous arms, yielding a 5'-phosphate and a 3'-hydroxyl group; requires a central core of homology in the junction. The consensus cleavage sequence is 5'-(A/T)TT(C/G)-3'. Cleavage occurs on the 3'-side of the TT dinucleotide at the point of strand exchange. HJ branch migration catalyzed by RuvA-RuvB allows RuvC to scan DNA until it finds its consensus sequence, where it cleaves and resolves the cruciform DNA. This chain is Crossover junction endodeoxyribonuclease RuvC, found in Cytophaga hutchinsonii (strain ATCC 33406 / DSM 1761 / CIP 103989 / NBRC 15051 / NCIMB 9469 / D465).